The chain runs to 2081 residues: Non-reducing polyketide synthase terA (2081 aa).

An N-terminal acylcarrier protein transacylase (SAT) domain (SAT) region spans residues 85–190 (TLTLAFRIGV…ISLDIFAPFH (106 aa)). Positions 316–749 (AQKIAIVGMA…GGNTGLLLED (434 aa)) constitute a Ketosynthase family 3 (KS3) domain. Residues Cys488, His623, and His667 each act as for beta-ketoacyl synthase activity in the active site. Residues 849-1147 (LFTGQGSHYT…LTLPSLRKQE (299 aa)) are malonyl-CoA:ACP transacylase (MAT) domain. The segment at 1230-1364 (QKVIKEDFGQ…CHVEYGDIKT (135 aa)) is N-terminal hotdog fold. Residues 1230-1539 (QKVIKEDFGQ…FKAIPRAVIN (310 aa)) enclose the PKS/mFAS DH domain. The product template (PT) domain stretch occupies residues 1259 to 1536 (VTGHLVNGSA…GVKFKAIPRA (278 aa)). The active-site Proton acceptor; for dehydratase activity is His1262. A C-terminal hotdog fold region spans residues 1392–1539 (YQKLDRKAAY…FKAIPRAVIN (148 aa)). The active-site Proton donor; for dehydratase activity is the Asp1452. A disordered region spans residues 1549-1578 (KALEKSAPRQNPKATATKTTQKPQAPVPVP). The span at 1558–1572 (QNPKATATKTTQKPQ) shows a compositional bias: low complexity. A Carrier 1 domain is found at 1580–1658 (KQNKAIIDDF…QVKELILKLA (79 aa)). Residue Ser1617 is modified to O-(pantetheine 4'-phosphoryl)serine. The tract at residues 1659-1700 (GSSSDENTTDTPDEEEDPATADADNTEMIRENPLESVSPNVS) is disordered. Residues 1665-1677 (NTTDTPDEEEDPA) are compositionally biased toward acidic residues. In terms of domain architecture, Carrier 2 spans 1699 to 1776 (VSSSEAMDGF…QARLAIASLM (78 aa)). An O-(pantetheine 4'-phosphoryl)serine modification is found at Ser1736. Residues 1783 to 1809 (GATTPYSGSDDAKSSTSSLTAGSVLTP) form a disordered region. The thioesterase (TE) domain stretch occupies residues 1840 to 2070 (TLFLLPDGSG…TMMREPKVNQ (231 aa)).

The catalysed reaction is 3 malonyl-CoA + acetyl-CoA + 2 H(+) = orsellinate + 3 CO2 + 4 CoA. Its pathway is secondary metabolite biosynthesis. In terms of biological role, non-reducing polyketide synthase; part of the gene cluster that mediates the biosynthesis of terrein, a fungal metabolite with ecological, antimicrobial, antiproliferative, and antioxidative activities. The first step in the pathway is performed by the polyketide synthase terA that produces 4-hydroxy-6-methylpyranon (4-HMP), orsellinic acid (OA), and 2,3-dehydro-6-hydroxymellein (2,3-dehydro-6-HM) by condensing acetyl-CoA with two, three, or four malonyl-CoA units, respectively. 4-HMP and OA are not pathway intermediates, but are rather shunt or side products. 2,3-dehydro-6-HM is further converted to 6-hydroxymellein (6-HM) by the 6-hydroxymellein synthase terB. The monooxygenases terC and terD, the multicopper oxidase terE and the Kelch-like protein terF are then involved in the transformation of 6-HM to terrein. Even if they are co-regulated with the other terrein cluster genes, terH and terI seem to be dispensable for terrein production; whereas one or both of the 2 transporters terG and terJ are probably required for efficient secretion of metabolites. In Aspergillus terreus (strain NIH 2624 / FGSC A1156), this protein is Non-reducing polyketide synthase terA.